Here is a 177-residue protein sequence, read N- to C-terminus: Peptidyl-tRNA hydrolase 1 (177 aa).

Tyrosine 18 contacts tRNA. Histidine 23 functions as the Proton acceptor in the catalytic mechanism. TRNA is bound by residues phenylalanine 65, asparagine 67, and asparagine 113.

The protein belongs to the PTH family. As to quaternary structure, monomer.

The protein localises to the cytoplasm. It carries out the reaction an N-acyl-L-alpha-aminoacyl-tRNA + H2O = an N-acyl-L-amino acid + a tRNA + H(+). Hydrolyzes ribosome-free peptidyl-tRNAs (with 1 or more amino acids incorporated), which drop off the ribosome during protein synthesis, or as a result of ribosome stalling. Functionally, catalyzes the release of premature peptidyl moieties from peptidyl-tRNA molecules trapped in stalled 50S ribosomal subunits, and thus maintains levels of free tRNAs and 50S ribosomes. This chain is Peptidyl-tRNA hydrolase 1, found in Corynebacterium glutamicum (strain ATCC 13032 / DSM 20300 / JCM 1318 / BCRC 11384 / CCUG 27702 / LMG 3730 / NBRC 12168 / NCIMB 10025 / NRRL B-2784 / 534).